The sequence spans 319 residues: Glucokinase (319 aa).

8 to 13 (GDIGGT) is an ATP binding site.

The protein belongs to the bacterial glucokinase family.

The protein localises to the cytoplasm. It catalyses the reaction D-glucose + ATP = D-glucose 6-phosphate + ADP + H(+). This is Glucokinase from Chromohalobacter salexigens (strain ATCC BAA-138 / DSM 3043 / CIP 106854 / NCIMB 13768 / 1H11).